Consider the following 888-residue polypeptide: Mitogen-activated protein kinase kinase kinase 12 (888 aa).

Over residues 26-42 the composition is skewed to basic and acidic residues; the sequence is MRKLDPDTSDCTPEKDL. The disordered stretch occupies residues 26 to 104; it reads MRKLDPDTSD…TGSPESRASR (79 aa). Phosphothreonine is present on residues threonine 37 and threonine 43. The span at 64 to 75 shows a compositional bias: pro residues; sequence SPSPGGEPPPEP. One can recognise a Protein kinase domain in the interval 158–399; the sequence is ILDLQWVGSG…FRQILLHLDI (242 aa). Residues 164–172 and lysine 185 contribute to the ATP site; that span reads VGSGAQGAV. Aspartate 269 functions as the Proton acceptor in the catalytic mechanism. Leucine-zipper stretches follow at residues 423–444 and 476–497; these read VKLH…EEEL and LNAL…EQAL. The tract at residues 557–620 is disordered; that stretch reads GVGLPGCPKA…GGLGVGPTAW (64 aa). The span at 572-584 shows a compositional bias: basic residues; that stretch reads RSRRGKTRHRKAS. A compositionally biased stretch (gly residues) spans 605–615; the sequence is GGLGSPGGLGV. Serine 640 carries the post-translational modification Phosphoserine. Disordered regions lie at residues 654–731 and 743–888; these read RGRG…YQHL and TRSQ…SLPP. Positions 704 to 725 are enriched in gly residues; the sequence is PGEGVGLLGTGREGTTGRGGSR. The segment covering 752 to 763 has biased composition (acidic residues); it reads SEEEEGEVDSEV. 2 stretches are compositionally biased toward polar residues: residues 776 to 789 and 798 to 812; these read NMRQ…SENP and SEPS…GSTN. The span at 813-823 shows a compositional bias: basic and acidic residues; the sequence is TDERPDERSDD.

The protein belongs to the protein kinase superfamily. STE Ser/Thr protein kinase family. MAP kinase kinase kinase subfamily. As to quaternary structure, homodimer. Interacts with MBIP. Mg(2+) is required as a cofactor. In terms of processing, autophosphorylated on Ser/Thr. Phosphorylated in cytosol under basal conditions and dephosphorylated when membrane-associated. Post-translationally, the activity of MAP3K12 can be regulated through its proteasomal degradation. APOE, through a receptor-mediated mechanism, activates MAP3K12 by preventing its proteasomal degradation.

The protein localises to the cytoplasm. The protein resides in the cell membrane. The catalysed reaction is L-seryl-[protein] + ATP = O-phospho-L-seryl-[protein] + ADP + H(+). The enzyme catalyses L-threonyl-[protein] + ATP = O-phospho-L-threonyl-[protein] + ADP + H(+). Functionally, part of a non-canonical MAPK signaling pathway. Activated by APOE, enhances the AP-1-mediated transcription of APP, via a MAP kinase signal transduction pathway composed of MAP2K7 and MAPK1/ERK2 and MAPK3/ERK1. May be an activator of the JNK/SAPK pathway. This Rattus norvegicus (Rat) protein is Mitogen-activated protein kinase kinase kinase 12 (Map3k12).